A 537-amino-acid chain; its full sequence is Arginine--tRNA ligase (537 aa).

Positions 113–123 match the 'HIGH' region motif; that stretch reads ANPTGRIHLGH.

It belongs to the class-I aminoacyl-tRNA synthetase family. Monomer.

The protein resides in the cytoplasm. The catalysed reaction is tRNA(Arg) + L-arginine + ATP = L-arginyl-tRNA(Arg) + AMP + diphosphate. The sequence is that of Arginine--tRNA ligase (argS) from Mycoplasma genitalium (strain ATCC 33530 / DSM 19775 / NCTC 10195 / G37) (Mycoplasmoides genitalium).